The sequence spans 684 residues: Calpain-14 (684 aa).

The 294-residue stretch at Leu43–Thr336 folds into the Calpain catalytic domain. Residues Cys101, His254, and Asn278 contribute to the active site. The interval Pro337–Asn503 is domain III. A linker region spans residues Ser504–Glu517. The segment at Arg518 to Tyr683 is domain IV. 3 EF-hand domains span residues Phe557–Ser592, Trp586–Met621, and Leu651–Ser684. Ca(2+) is bound by residues Asp570, Asn572, Ser574, Thr576, and Glu581.

This sequence belongs to the peptidase C2 family. In terms of tissue distribution, not expressed in tissues tested.

Calcium-regulated non-lysosomal thiol-protease. The protein is Calpain-14 (CAPN14) of Homo sapiens (Human).